The primary structure comprises 1206 residues: uncharacterized protein (1206 aa).

Disordered stretches follow at residues 133–547, 568–837, and 859–1206; these read YDLD…PVDY, FASS…DQLL, and RQRA…KATS. 2 stretches are compositionally biased toward pro residues: residues 139 to 151 and 159 to 234; these read IPPP…PGPP and GESP…PPAP. Position 255 is a phosphoserine (serine 255). Over residues 305-319 the composition is skewed to low complexity; it reads VRTSSIPVQEAPGAS. Residues 351–363 show a composition bias toward basic and acidic residues; the sequence is RALEPEQPREPRP. Residues 384-413 are compositionally biased toward pro residues; that stretch reads APPPAPPLPPPAPPLPPPAPSLPPAAPPLP. Low complexity predominate over residues 414 to 436; the sequence is STELAAPPSSGFMKTSKSNSPAL. Positions 454 to 467 are enriched in basic and acidic residues; the sequence is VDWRDPRQMEKLRS. Residues 522-531 are compositionally biased toward low complexity; the sequence is PEKSPSSSSL. The span at 568–577 shows a compositional bias: basic and acidic residues; sequence FASSAEKEAK. Positions 656–671 are enriched in low complexity; the sequence is LPKATPGLTLPLKPTP. Residue threonine 680 is modified to Phosphothreonine. Over residues 732 to 747 the composition is skewed to basic and acidic residues; that stretch reads AEKDLASVRQREKPET. Positions 1001 to 1016 are enriched in pro residues; sequence IPPPPEFSNDPEPPAP. A compositionally biased stretch (polar residues) spans 1028-1041; it reads PRNNFSDLGQSWGP. Residues arginine 1051, arginine 1083, and arginine 1094 each carry the omega-N-methylarginine modification. Residues 1170 to 1184 show a composition bias toward polar residues; sequence PHGNTHYGSPINTFT.

This is an uncharacterized protein from Mus musculus (Mouse).